Consider the following 485-residue polypeptide: Aspartyl/glutamyl-tRNA(Asn/Gln) amidotransferase subunit B (485 aa).

Belongs to the GatB/GatE family. GatB subfamily. In terms of assembly, heterotrimer of A, B and C subunits.

The catalysed reaction is L-glutamyl-tRNA(Gln) + L-glutamine + ATP + H2O = L-glutaminyl-tRNA(Gln) + L-glutamate + ADP + phosphate + H(+). The enzyme catalyses L-aspartyl-tRNA(Asn) + L-glutamine + ATP + H2O = L-asparaginyl-tRNA(Asn) + L-glutamate + ADP + phosphate + 2 H(+). Its function is as follows. Allows the formation of correctly charged Asn-tRNA(Asn) or Gln-tRNA(Gln) through the transamidation of misacylated Asp-tRNA(Asn) or Glu-tRNA(Gln) in organisms which lack either or both of asparaginyl-tRNA or glutaminyl-tRNA synthetases. The reaction takes place in the presence of glutamine and ATP through an activated phospho-Asp-tRNA(Asn) or phospho-Glu-tRNA(Gln). The chain is Aspartyl/glutamyl-tRNA(Asn/Gln) amidotransferase subunit B from Borreliella afzelii (strain PKo) (Borrelia afzelii).